A 310-amino-acid chain; its full sequence is Biotin synthase (310 aa).

Residues 34 to 262 (GRVQLCALVN…TAQIRLSAGR (229 aa)) enclose the Radical SAM core domain. C49, C53, and C56 together coordinate [4Fe-4S] cluster. 4 residues coordinate [2Fe-2S] cluster: C93, C125, C185, and R257.

This sequence belongs to the radical SAM superfamily. Biotin synthase family. As to quaternary structure, homodimer. Requires [4Fe-4S] cluster as cofactor. [2Fe-2S] cluster is required as a cofactor.

The catalysed reaction is (4R,5S)-dethiobiotin + (sulfur carrier)-SH + 2 reduced [2Fe-2S]-[ferredoxin] + 2 S-adenosyl-L-methionine = (sulfur carrier)-H + biotin + 2 5'-deoxyadenosine + 2 L-methionine + 2 oxidized [2Fe-2S]-[ferredoxin]. It functions in the pathway cofactor biosynthesis; biotin biosynthesis; biotin from 7,8-diaminononanoate: step 2/2. Functionally, catalyzes the conversion of dethiobiotin (DTB) to biotin by the insertion of a sulfur atom into dethiobiotin via a radical-based mechanism. In Synechococcus sp. (strain JA-3-3Ab) (Cyanobacteria bacterium Yellowstone A-Prime), this protein is Biotin synthase.